A 247-amino-acid chain; its full sequence is Uridylate kinase (247 aa).

Position 19-22 (19-22 (KISG)) interacts with ATP. Gly-61 lines the UMP pocket. Gly-62 and Arg-66 together coordinate ATP. UMP-binding positions include Asp-81 and 142 to 149 (TGNPFFTT). Residues Thr-169, Gln-170, Tyr-175, and Asp-178 each contribute to the ATP site.

It belongs to the UMP kinase family. As to quaternary structure, homohexamer.

The protein resides in the cytoplasm. The catalysed reaction is UMP + ATP = UDP + ADP. The protein operates within pyrimidine metabolism; CTP biosynthesis via de novo pathway; UDP from UMP (UMPK route): step 1/1. Its activity is regulated as follows. Inhibited by UTP. Functionally, catalyzes the reversible phosphorylation of UMP to UDP. The polypeptide is Uridylate kinase (Wolbachia pipientis wMel).